The primary structure comprises 132 residues: Sec-independent protein translocase protein TatB (132 aa).

A helical membrane pass occupies residues 2 to 22 (FDGIGFMELLLIGILGLVVLG). Composition is skewed to polar residues over residues 86-95 (LKQAAQSVNR) and 116-132 (IAET…KNNG). Positions 86–132 (LKQAAQSVNRPYQLDESNEQEPKIAPPQANIAETPTQSGDTHSKNNG) are disordered.

Belongs to the TatB family. In terms of assembly, the Tat system comprises two distinct complexes: a TatABC complex, containing multiple copies of TatA, TatB and TatC subunits, and a separate TatA complex, containing only TatA subunits. Substrates initially bind to the TatABC complex, which probably triggers association of the separate TatA complex to form the active translocon.

It localises to the cell inner membrane. Functionally, part of the twin-arginine translocation (Tat) system that transports large folded proteins containing a characteristic twin-arginine motif in their signal peptide across membranes. Together with TatC, TatB is part of a receptor directly interacting with Tat signal peptides. TatB may form an oligomeric binding site that transiently accommodates folded Tat precursor proteins before their translocation. In Shewanella denitrificans (strain OS217 / ATCC BAA-1090 / DSM 15013), this protein is Sec-independent protein translocase protein TatB.